The sequence spans 491 residues: Lysosomal Pro-X carboxypeptidase (491 aa).

Positions 1–17 (MGCRALLLLSFLLLGAA) are cleaved as a signal peptide. The propeptide occupies 18-43 (TTIPPRLKTLGSPHLSASPTPDPAVA). The N-linked (GlcNAc...) asparagine glycan is linked to Asn99. Ser177 (charge relay system) is an active-site residue. The interval 192 to 332 (HIVVGALAAS…QNIFQALSVY (141 aa)) is SKS domain. Intrachain disulfides connect Cys213-Cys370, Cys231-Cys308, Cys262-Cys341, and Cys362-Cys392. Asn315, Asn334, and Asn343 each carry an N-linked (GlcNAc...) asparagine glycan. Asn413 carries an N-linked (GlcNAc...) asparagine glycan. Residues Asp428 and His453 each act as charge relay system in the active site.

It belongs to the peptidase S28 family. In terms of assembly, homodimer.

The protein localises to the lysosome. The catalysed reaction is Cleavage of a -Pro-|-Xaa bond to release a C-terminal amino acid.. Its function is as follows. Cleaves C-terminal amino acids linked to proline in peptides such as angiotensin II, III and des-Arg9-bradykinin. This cleavage occurs at acidic pH, but enzymatic activity is retained with some substrates at neutral pH. This chain is Lysosomal Pro-X carboxypeptidase (Prcp), found in Mus musculus (Mouse).